We begin with the raw amino-acid sequence, 491 residues long: Serralysin (491 aa).

The propeptide occupies 1 to 16; the sequence is MGSFLLKKAVGLSNIS. Histidine 186 is a Zn(2+) binding site. The active site involves glutamate 187. Zn(2+)-binding residues include histidine 190, histidine 196, and tyrosine 226. Positions 263, 265, 295, 297, 298, 300, 337, 339, 344, 346, 348, 353, 355, 357, 361, 362, 364, 366, 370, 373, 384, 388, 389, 391, 402, 409, and 419 each coordinate Ca(2+). Hemolysin-type calcium-binding repeat units lie at residues 342 to 359, 360 to 377, and 378 to 395; these read IGGF…DNTL, IGGE…NNTI, and YGGR…SNTF.

The protein belongs to the peptidase M10B family. Ca(2+) serves as cofactor. Requires Zn(2+) as cofactor.

The protein resides in the secreted. The catalysed reaction is Preferential cleavage of bonds with hydrophobic residues in P1'.. Ca(2+) increases protease activity. Functionally, one of the virulence factors produced during swarmer cell differentiation of the bacteria, which seems to be associated with pathogenesis. The protease activity is limited to IgA1, IgA2, as well as IgG degradation. In Proteus mirabilis, this protein is Serralysin (zapA).